A 128-amino-acid chain; its full sequence is Fluoride-specific ion channel FluC 1 (128 aa).

The next 4 membrane-spanning stretches (helical) occupy residues 10–30 (VAFFAFWGGLARYGLTEAFSF), 32–52 (GTVIANLLGCFLLAFLTYFFL), 59–79 (AWLTTGLGTGFVGAFTTFSSF), and 93–113 (FGALLYFTGTIAAGFLFAWAG). Na(+)-binding residues include glycine 71 and threonine 74.

This sequence belongs to the fluoride channel Fluc/FEX (TC 1.A.43) family.

The protein localises to the cell membrane. It carries out the reaction fluoride(in) = fluoride(out). Its activity is regulated as follows. Na(+) is not transported, but it plays an essential structural role and its presence is essential for fluoride channel function. Fluoride-specific ion channel. Important for reducing fluoride concentration in the cell, thus reducing its toxicity. In Lactobacillus delbrueckii subsp. bulgaricus (strain ATCC 11842 / DSM 20081 / BCRC 10696 / JCM 1002 / NBRC 13953 / NCIMB 11778 / NCTC 12712 / WDCM 00102 / Lb 14), this protein is Fluoride-specific ion channel FluC 1.